We begin with the raw amino-acid sequence, 253 residues long: MATIKEIKAILETIVDLKDKRWQEYQTDSRAGVQKAILQRKKNIQSDLDEEARLEQMLVYEKKLYIEHINLIAGIDEVGRGPLAGPVVAAAVILPPNCKIKHLNDSKKIPKKKHQEIYQNILDQALAVGIGIQDSQCIDDINIYEATKHAMIDAVSHLSVVPEHLLIDAMVLDLPIPQTKIIKGDANSLSIAAASIVAKVTRDKIMSDYDSKYPGYAFSKNAGYGTKEHLEGLQKYGITPIHRKSFEPIKSML.

Residues 70–253 enclose the RNase H type-2 domain; it reads NLIAGIDEVG…KSFEPIKSML (184 aa). Positions 76, 77, and 168 each coordinate a divalent metal cation.

It belongs to the RNase HII family. It depends on Mn(2+) as a cofactor. Requires Mg(2+) as cofactor.

It is found in the cytoplasm. It catalyses the reaction Endonucleolytic cleavage to 5'-phosphomonoester.. Functionally, endonuclease that specifically degrades the RNA of RNA-DNA hybrids. The polypeptide is Ribonuclease HII (Streptococcus agalactiae serotype Ia (strain ATCC 27591 / A909 / CDC SS700)).